The primary structure comprises 368 residues: tRNA-specific 2-thiouridylase MnmA (368 aa).

ATP-binding positions include 11 to 18 (GMSGGVDS) and Met37. Residues 97–99 (NPD) form an interaction with target base in tRNA region. Cys102 functions as the Nucleophile in the catalytic mechanism. A disulfide bond links Cys102 and Cys199. Position 127 (Gly127) interacts with ATP. An interaction with tRNA region spans residues 149–151 (KDQ). Cys199 serves as the catalytic Cysteine persulfide intermediate. An interaction with tRNA region spans residues 311-312 (RY).

This sequence belongs to the MnmA/TRMU family.

The protein localises to the cytoplasm. The enzyme catalyses S-sulfanyl-L-cysteinyl-[protein] + uridine(34) in tRNA + AH2 + ATP = 2-thiouridine(34) in tRNA + L-cysteinyl-[protein] + A + AMP + diphosphate + H(+). Catalyzes the 2-thiolation of uridine at the wobble position (U34) of tRNA, leading to the formation of s(2)U34. The sequence is that of tRNA-specific 2-thiouridylase MnmA from Baumannia cicadellinicola subsp. Homalodisca coagulata.